The sequence spans 163 residues: Lysosomal enzyme trafficking factor (163 aa).

The next 2 helical transmembrane spans lie at 40-60 and 98-118; these read MGWI…YYVF and LPFW…FLFL.

The protein belongs to the LYSET family. In terms of assembly, interacts with GNPTAB; this interaction is important for proper localization of GNPTAB in Golgi stacks. Interacts with MBTPS1.

The protein localises to the golgi apparatus membrane. Required for mannose-6-phosphate-dependent trafficking of lysosomal enzymes. LYSET bridges GlcNAc-1-phosphate transferase (GNPTAB), to the membrane-bound transcription factor site-1 protease (MBTPS1), thus allowing proteolytic activation of the GNPTAB. GNPTAB is involved in the regulation of M6P-dependent Golgi-to-lysosome trafficking of lysosomal enzymes. LYSET is thus an essential factor for maturation and delivery of lysosomal hydrolases. The chain is Lysosomal enzyme trafficking factor (LYSET) from Bos taurus (Bovine).